Here is a 458-residue protein sequence, read N- to C-terminus: Retinoic acid receptor gamma (458 aa).

Residues 1–89 (MATNKERLFA…PPPPPRVYKP (89 aa)) are modulating. The residue at position 34 (R34) is an Omega-N-methylarginine. The interval 58–83 (MASLSVETQSTSSEEMVPSSPSPPPP) is disordered. A compositionally biased stretch (polar residues) spans 62 to 71 (SVETQSTSSE). NR C4-type zinc fingers lie at residues 90–110 (CFVC…CEGC) and 126–150 (CHRD…LQKC). Positions 90–155 (CFVCNDKSSG…RLQKCFEVGM (66 aa)) form a DNA-binding region, nuclear receptor. The hinge stretch occupies residues 156–184 (SKEAVRNDRNKKKKEVKEEGSPDSYELSP). The tract at residues 161–180 (RNDRNKKKKEVKEEGSPDSY) is disordered. Glycyl lysine isopeptide (Lys-Gly) (interchain with G-Cter in SUMO2) cross-links involve residues K172 and K401. In terms of domain architecture, NR LBD spans 185 to 419 (QLEELITKVS…PLIREMLENP (235 aa)). The tract at residues 409–458 (PPLIREMLENPEMFEDDSSKPGPHPKASSEDEAPGGQGKRGQSPQPDQGP) is disordered. The span at 448–458 (RGQSPQPDQGP) shows a compositional bias: polar residues.

The protein belongs to the nuclear hormone receptor family. NR1 subfamily. In terms of assembly, homodimer. Heterodimer with a RXR molecule. Binds DNA preferentially as a RAR/RXR heterodimer. Forms a complex with PUS1 and the SRA1 RNA in the nucleus.

It is found in the nucleus. Its subcellular location is the cytoplasm. In terms of biological role, receptor for retinoic acid. Retinoic acid receptors bind as heterodimers to their target response elements in response to their ligands, all-trans or 9-cis retinoic acid, and regulate gene expression in various biological processes. The RAR/RXR heterodimers bind to the retinoic acid response elements (RARE) composed of tandem 5'-AGGTCA-3' sites known as DR1-DR5. In the absence of ligand, acts mainly as an activator of gene expression due to weak binding to corepressors. Required for limb bud development. In concert with RARA or RARB, required for skeletal growth, matrix homeostasis and growth plate function. In Mus musculus (Mouse), this protein is Retinoic acid receptor gamma (Rarg).